The sequence spans 450 residues: MSLLQFSGLFVVWLLCTLFIATLTWFEFRRVRFNFNVFFSLLFLLTFFFGFPLTSVLVFRFDVGVAPPEILLQVLLSAGCFYAVYYVTYKTRLRKRVADVPRRPLFTMNRVETNLTWVILMGIALVSVGIFFMHNGFLLFRLNSYSQIFSSEVSGVALKRFFYFFIPAMLVVYFLRQDSKAWLFFLVSTVAFGLLTYMIVGGTRANIIIAFAIFLFIGIIRGWISLWMLAAAGVLGIVGMFWLALKRYGMNVSGDEAFYTFLYLTRDTFSPWENLALLLQNYDNIDFQGLAPIVRDFYVFIPSWLWPGRPSMVLNSANYFTWEVLNNHSGLAISPTLIGSLVVMGGALFIPLGAIVVGLIIKWFDWLYELGNRETNRYKAAILHSFCFGAIFNMIVLAREGLDSFVSRVVFFIVVFGACLMIAKLLYWLFESAGLIHKRTKSSLRTQVEG.

Transmembrane regions (helical) follow at residues 6–26, 37–57, 63–83, 118–138, 155–175, 181–201, 207–227, 228–248, 341–361, 378–398, and 410–430; these read FSGLFVVWLLCTLFIATLTWF, VFFSLLFLLTFFFGFPLTSVL, VGVAPPEILLQVLLSAGCFYA, VILMGIALVSVGIFFMHNGFL, GVALKRFFYFFIPAMLVVYFL, AWLFFLVSTVAFGLLTYMIVG, IIIAFAIFLFIGIIRGWISLW, MLAAAGVLGIVGMFWLALKRY, LVVMGGALFIPLGAIVVGLII, YKAAILHSFCFGAIFNMIVLA, and VFFIVVFGACLMIAKLLYWLF.

It belongs to the WzyE family. As to quaternary structure, probably part of a complex composed of WzxE, WzyE and WzzE.

It is found in the cell inner membrane. The protein operates within bacterial outer membrane biogenesis; enterobacterial common antigen biosynthesis. Probably involved in the polymerization of enterobacterial common antigen (ECA) trisaccharide repeat units. The protein is Probable ECA polymerase of Shigella flexneri.